Consider the following 117-residue polypeptide: Large ribosomal subunit protein uL22 (117 aa).

It belongs to the universal ribosomal protein uL22 family. As to quaternary structure, part of the 50S ribosomal subunit.

Its function is as follows. This protein binds specifically to 23S rRNA; its binding is stimulated by other ribosomal proteins, e.g. L4, L17, and L20. It is important during the early stages of 50S assembly. It makes multiple contacts with different domains of the 23S rRNA in the assembled 50S subunit and ribosome. The globular domain of the protein is located near the polypeptide exit tunnel on the outside of the subunit, while an extended beta-hairpin is found that lines the wall of the exit tunnel in the center of the 70S ribosome. The sequence is that of Large ribosomal subunit protein uL22 from Lactobacillus gasseri (strain ATCC 33323 / DSM 20243 / BCRC 14619 / CIP 102991 / JCM 1131 / KCTC 3163 / NCIMB 11718 / NCTC 13722 / AM63).